Reading from the N-terminus, the 605-residue chain is Isocitrate dehydrogenase kinase/phosphatase (605 aa).

Residues 327–333 and lysine 348 contribute to the ATP site; that span reads APGIKGL. The active site involves aspartate 383.

This sequence belongs to the AceK family.

Its subcellular location is the cytoplasm. The enzyme catalyses L-seryl-[isocitrate dehydrogenase] + ATP = O-phospho-L-seryl-[isocitrate dehydrogenase] + ADP + H(+). In terms of biological role, bifunctional enzyme which can phosphorylate or dephosphorylate isocitrate dehydrogenase (IDH) on a specific serine residue. This is a regulatory mechanism which enables bacteria to bypass the Krebs cycle via the glyoxylate shunt in response to the source of carbon. When bacteria are grown on glucose, IDH is fully active and unphosphorylated, but when grown on acetate or ethanol, the activity of IDH declines drastically concomitant with its phosphorylation. In Burkholderia orbicola (strain AU 1054), this protein is Isocitrate dehydrogenase kinase/phosphatase.